The primary structure comprises 338 residues: Ketol-acid reductoisomerase (NADP(+)) (338 aa).

Residues 1–181 (MKVYYDKDAD…GGTKGGVIET (181 aa)) form the KARI N-terminal Rossmann domain. NADP(+) contacts are provided by residues 24–27 (YGSQ), Arg-47, Ser-52, and 82–85 (DESQ). The active site involves His-107. Gly-133 lines the NADP(+) pocket. Residues 182-327 (NFREETETDL…AELRAMMPWI (146 aa)) enclose the KARI C-terminal knotted domain. Mg(2+)-binding residues include Asp-190, Glu-194, Glu-226, and Glu-230. Ser-251 provides a ligand contact to substrate.

This sequence belongs to the ketol-acid reductoisomerase family. The cofactor is Mg(2+).

The enzyme catalyses (2R)-2,3-dihydroxy-3-methylbutanoate + NADP(+) = (2S)-2-acetolactate + NADPH + H(+). It catalyses the reaction (2R,3R)-2,3-dihydroxy-3-methylpentanoate + NADP(+) = (S)-2-ethyl-2-hydroxy-3-oxobutanoate + NADPH + H(+). It participates in amino-acid biosynthesis; L-isoleucine biosynthesis; L-isoleucine from 2-oxobutanoate: step 2/4. The protein operates within amino-acid biosynthesis; L-valine biosynthesis; L-valine from pyruvate: step 2/4. Functionally, involved in the biosynthesis of branched-chain amino acids (BCAA). Catalyzes an alkyl-migration followed by a ketol-acid reduction of (S)-2-acetolactate (S2AL) to yield (R)-2,3-dihydroxy-isovalerate. In the isomerase reaction, S2AL is rearranged via a Mg-dependent methyl migration to produce 3-hydroxy-3-methyl-2-ketobutyrate (HMKB). In the reductase reaction, this 2-ketoacid undergoes a metal-dependent reduction by NADPH to yield (R)-2,3-dihydroxy-isovalerate. In Chromobacterium violaceum (strain ATCC 12472 / DSM 30191 / JCM 1249 / CCUG 213 / NBRC 12614 / NCIMB 9131 / NCTC 9757 / MK), this protein is Ketol-acid reductoisomerase (NADP(+)).